The primary structure comprises 286 residues: ATP synthase gamma chain (286 aa).

Belongs to the ATPase gamma chain family. F-type ATPases have 2 components, CF(1) - the catalytic core - and CF(0) - the membrane proton channel. CF(1) has five subunits: alpha(3), beta(3), gamma(1), delta(1), epsilon(1). CF(0) has three main subunits: a, b and c.

The protein localises to the cell inner membrane. Produces ATP from ADP in the presence of a proton gradient across the membrane. The gamma chain is believed to be important in regulating ATPase activity and the flow of protons through the CF(0) complex. This is ATP synthase gamma chain from Fuscovulum blasticum (Rhodobacter blasticus).